Here is a 393-residue protein sequence, read N- to C-terminus: Cobalt-precorrin-5B C(1)-methyltransferase (393 aa).

Positions Met-1–Phe-35 are disordered. A compositionally biased stretch (basic and acidic residues) spans Glu-18–Asn-31.

The protein belongs to the CbiD family.

The catalysed reaction is Co-precorrin-5B + S-adenosyl-L-methionine = Co-precorrin-6A + S-adenosyl-L-homocysteine. The protein operates within cofactor biosynthesis; adenosylcobalamin biosynthesis; cob(II)yrinate a,c-diamide from sirohydrochlorin (anaerobic route): step 6/10. Functionally, catalyzes the methylation of C-1 in cobalt-precorrin-5B to form cobalt-precorrin-6A. This chain is Cobalt-precorrin-5B C(1)-methyltransferase, found in Dechloromonas aromatica (strain RCB).